Consider the following 505-residue polypeptide: MKNEKKKSGIEPKVFFPPLIIVGILCWLTVRDLDAANVVINAVFSYVTNVWGWAFEWYMVVMLFGWFWLVFGPYAKKRLGDEKPEFSTASWIFMMFASCTSAAVLFWGSIEIYYYISTPPFGLEPNSTGAKEIGLAYSLFHWGPLPWATYSFLSVAFAYFFFVRKMDVIRPSSTLVPLVGEKHAKGLFGTIVDNFYLVALIFAMGTSLGLATPLVTECMQWLFGIPHTLQLDAIIITCWIILNAICVACGLQKGVRIASDVRSYLSFLMLGWVFIVSGASFIMNYFTDSVGMLLMHLPRMLFYTDAIGKGGFPQGWTVFYWAWWVIYAIQMSIFLARISRGRTVRELCFGMVMGLTASTWILWTVLGSNTLLLMDKNILNIPQLIEQHGVARAIIETWAALPLSTATMWGFFILCFIATVTLINACSYTLAMSTCREVRDGEEPPLLVRIGWSVLVGIIGIVLLALGGLKPIQTAIIAGGCPLFFVNIMVTLSFIKDAKVHWKDK.

Helical transmembrane passes span 10-30 (IEPK…WLTV), 51-71 (WGWA…WLVF), 92-112 (IFMM…SIEI), 143-163 (GPLP…FFFV), 195-215 (FYLV…TPLV), 231-251 (LDAI…ACGL), 263-283 (SYLS…SFIM), 316-336 (WTVF…IFLA), 347-367 (LCFG…TVLG), 403-423 (LSTA…VTLI), 446-466 (LLVR…LLAL), and 475-495 (AIIA…LSFI).

Belongs to the BCCT transporter (TC 2.A.15) family. CaiT subfamily. Homotrimer.

It is found in the cell inner membrane. The enzyme catalyses 4-(trimethylamino)butanoate(in) + (R)-carnitine(out) = 4-(trimethylamino)butanoate(out) + (R)-carnitine(in). It functions in the pathway amine and polyamine metabolism; carnitine metabolism. Functionally, catalyzes the exchange of L-carnitine for gamma-butyrobetaine. The protein is L-carnitine/gamma-butyrobetaine antiporter of Salmonella agona (strain SL483).